The primary structure comprises 102 residues: MHQARIKLTGTDPEKLAYVCDQLKKIAERTGVDLSGPIPLPTKKLVVPTRKSPDGEGKASWEKWELRIHKRLVGIGADERAMRQVMKVNVPDNVSIEIELKG.

Belongs to the universal ribosomal protein uS10 family. Part of the 30S ribosomal subunit.

Involved in the binding of tRNA to the ribosomes. This chain is Small ribosomal subunit protein uS10, found in Methanobrevibacter smithii (strain ATCC 35061 / DSM 861 / OCM 144 / PS).